The chain runs to 212 residues: Hydroxyacylglutathione hydrolase GloC (212 aa).

Zn(2+)-binding residues include His-55, His-57, Asp-59, His-60, His-132, Asp-151, and His-192.

The protein belongs to the metallo-beta-lactamase superfamily. Glyoxalase II family. The cofactor is Zn(2+).

It catalyses the reaction an S-(2-hydroxyacyl)glutathione + H2O = a 2-hydroxy carboxylate + glutathione + H(+). The catalysed reaction is (R)-S-lactoylglutathione + H2O = (R)-lactate + glutathione + H(+). Its pathway is secondary metabolite metabolism; methylglyoxal degradation; (R)-lactate from methylglyoxal: step 2/2. Type II glyoxalase, isozyme of GloB, that hydrolyzes (R)-S-lactoylglutathione to (R)-lactate and glutathione. Plays a role in methylglyoxal (MG) detoxification. In Haemophilus influenzae (strain ATCC 51907 / DSM 11121 / KW20 / Rd), this protein is Hydroxyacylglutathione hydrolase GloC.